The primary structure comprises 93 residues: RNA-binding protein Hfq (93 aa).

In terms of domain architecture, Sm spans 9–68 (DPFLNALRRERVPVSIYLVNGIKLQGQVESFDQFVILLKNTVSQMVYKHAISTVVPARPF). Residues 70–93 (VNSHTAAPSPAGGFNGQQDDNNDQ) are disordered.

This sequence belongs to the Hfq family. In terms of assembly, homohexamer.

In terms of biological role, RNA chaperone that binds small regulatory RNA (sRNAs) and mRNAs to facilitate mRNA translational regulation in response to envelope stress, environmental stress and changes in metabolite concentrations. Also binds with high specificity to tRNAs. In Shewanella sediminis (strain HAW-EB3), this protein is RNA-binding protein Hfq.